The following is a 219-amino-acid chain: Endo-type membrane-bound lytic murein transglycosylase A-like protein (219 aa).

Belongs to the transglycosylase Slt family.

It carries out the reaction Endolytic cleavage of the (1-&gt;4)-beta-glycosidic linkage between N-acetylmuramic acid (MurNAc) and N-acetylglucosamine (GlcNAc) residues in peptidoglycan with concomitant formation of a 1,6-anhydrobond in the MurNAc residue.. Murein-degrading enzyme. May play a role in recycling of muropeptides during cell elongation and/or cell division (Potential). This chain is Endo-type membrane-bound lytic murein transglycosylase A-like protein, found in Shigella flexneri.